The sequence spans 332 residues: 2,3-diketo-L-gulonate reductase (332 aa).

His-44 acts as the Proton donor in catalysis. NAD(+)-binding positions include 168–174, 224–225, and 304–306; these read ITMVDMS, WK, and GHE.

The protein belongs to the LDH2/MDH2 oxidoreductase family. DlgD subfamily. In terms of assembly, homodimer.

The protein localises to the cytoplasm. The catalysed reaction is 3-dehydro-L-gulonate + NAD(+) = 2,3-dioxo-L-gulonate + NADH + H(+). It catalyses the reaction 3-dehydro-L-gulonate + NADP(+) = 2,3-dioxo-L-gulonate + NADPH + H(+). Its function is as follows. Catalyzes the reduction of 2,3-diketo-L-gulonate in the presence of NADH, to form 3-keto-L-gulonate. This is 2,3-diketo-L-gulonate reductase from Escherichia coli (strain K12 / MC4100 / BW2952).